The primary structure comprises 279 residues: Probable autolysin LDP (279 aa).

An N-terminal signal peptide occupies residues 1-24; the sequence is MKKSLTVTVSSVLAFLALNNAAHA. The LysM domain occupies 51–94; that stretch reads TTYTVVAGDSLYKIALEHHLTLNQLYSYNPGVTPLIFPGDVISL. The Peptidase C51 domain occupies 158–279; it reads VPTVPVAHNY…LNPGKYNYIH (122 aa).

The catalysed reaction is Hydrolyzes the link between N-acetylmuramoyl residues and L-amino acid residues in certain cell-wall glycopeptides.. Its function is as follows. Has weak lytic activity toward S.aureus cells. In Staphylococcus aureus (strain NCTC 8325 / PS 47), this protein is Probable autolysin LDP.